Reading from the N-terminus, the 196-residue chain is Probable malonic semialdehyde reductase RutE (196 aa).

Belongs to the nitroreductase family. HadB/RutE subfamily. The cofactor is FMN.

The catalysed reaction is 3-hydroxypropanoate + NADP(+) = 3-oxopropanoate + NADPH + H(+). May reduce toxic product malonic semialdehyde to 3-hydroxypropionic acid, which is excreted. The sequence is that of Probable malonic semialdehyde reductase RutE from Escherichia coli O157:H7.